The chain runs to 513 residues: GMP synthase [glutamine-hydrolyzing] (513 aa).

One can recognise a Glutamine amidotransferase type-1 domain in the interval 9–198 (LILVLDFGSQ…VRRVCDCRGQ (190 aa)). The active-site Nucleophile is Cys86. Residues His172 and Glu174 contribute to the active site. One can recognise a GMPS ATP-PPase domain in the interval 199-388 (WTMENFIEIE…LGIPEHLVWR (190 aa)). Position 226–232 (226–232 (SGGVDSS)) interacts with ATP.

Homodimer.

It catalyses the reaction XMP + L-glutamine + ATP + H2O = GMP + L-glutamate + AMP + diphosphate + 2 H(+). The protein operates within purine metabolism; GMP biosynthesis; GMP from XMP (L-Gln route): step 1/1. In terms of biological role, catalyzes the synthesis of GMP from XMP. The polypeptide is GMP synthase [glutamine-hydrolyzing] (Staphylococcus aureus (strain USA300)).